The following is a 267-amino-acid chain: Hydroxyethylthiazole kinase (267 aa).

Met46 contacts substrate. Residues Arg121 and Thr167 each coordinate ATP. Ala194 lines the substrate pocket.

It belongs to the Thz kinase family. The cofactor is Mg(2+).

It catalyses the reaction 5-(2-hydroxyethyl)-4-methylthiazole + ATP = 4-methyl-5-(2-phosphooxyethyl)-thiazole + ADP + H(+). The protein operates within cofactor biosynthesis; thiamine diphosphate biosynthesis; 4-methyl-5-(2-phosphoethyl)-thiazole from 5-(2-hydroxyethyl)-4-methylthiazole: step 1/1. In terms of biological role, catalyzes the phosphorylation of the hydroxyl group of 4-methyl-5-beta-hydroxyethylthiazole (THZ). In Rhizobium leguminosarum bv. trifolii (strain WSM2304), this protein is Hydroxyethylthiazole kinase.